We begin with the raw amino-acid sequence, 380 residues long: Cytochrome b (380 aa).

Helical transmembrane passes span 34-54, 78-99, 114-134, and 179-199; these read FGSLLGICLATQILTGLLLAM, WLIRNLHANGASFFFICIYLHI, WNTGILLLLTLMATAFVGYVL, and FFALHFLLPFVIAGLTLIHLT. His84 and His98 together coordinate heme b. The heme b site is built by His183 and His197. An a ubiquinone-binding site is contributed by His202. 4 helical membrane passes run 227-247, 289-309, 321-341, and 348-368; these read LKDILGFMLMFLSLTTLALFS, LGGVLALAASVLMMFLSPLLH, LSQLLFWTLVANLFILTWVGS, and FIIIGQLASFTYFTILLILLP.

Belongs to the cytochrome b family. In terms of assembly, the cytochrome bc1 complex contains 11 subunits: 3 respiratory subunits (MT-CYB, CYC1 and UQCRFS1), 2 core proteins (UQCRC1 and UQCRC2) and 6 low-molecular weight proteins (UQCRH/QCR6, UQCRB/QCR7, UQCRQ/QCR8, UQCR10/QCR9, UQCR11/QCR10 and a cleavage product of UQCRFS1). This cytochrome bc1 complex then forms a dimer. Heme b serves as cofactor.

Its subcellular location is the mitochondrion inner membrane. Functionally, component of the ubiquinol-cytochrome c reductase complex (complex III or cytochrome b-c1 complex) that is part of the mitochondrial respiratory chain. The b-c1 complex mediates electron transfer from ubiquinol to cytochrome c. Contributes to the generation of a proton gradient across the mitochondrial membrane that is then used for ATP synthesis. This Pelagodroma marina (White-faced storm-petrel) protein is Cytochrome b (MT-CYB).